The sequence spans 448 residues: Cysteine--tRNA ligase (448 aa).

Cysteine 27 is a Zn(2+) binding site. The short motif at 29–39 is the 'HIGH' region element; sequence PTVYNYIHVGN. Zn(2+) is bound by residues cysteine 210, histidine 235, and glutamate 239. A 'KMSKS' region motif is present at residues 267–271; it reads KMSKS. Lysine 270 provides a ligand contact to ATP.

The protein belongs to the class-I aminoacyl-tRNA synthetase family. As to quaternary structure, monomer. The cofactor is Zn(2+).

It is found in the cytoplasm. It carries out the reaction tRNA(Cys) + L-cysteine + ATP = L-cysteinyl-tRNA(Cys) + AMP + diphosphate. The protein is Cysteine--tRNA ligase of Lactococcus lactis subsp. cremoris (strain MG1363).